Here is a 186-residue protein sequence, read N- to C-terminus: Holliday junction branch migration complex subunit RuvA (186 aa).

The segment at 1 to 61 is domain I; the sequence is MYRYIKGIVT…EDIFQLYGFK (61 aa). The tract at residues 62–134 is domain II; it reads DEETLNLFLK…LKGKLVNDEL (73 aa). Residues 134 to 137 are flexible linker; it reads LDMQ. A domain III region spans residues 138-186; sequence LLSDNSKDVAAALEALGYNKKEIAKSLKHVNFDQDLNKALKEALAILLK.

It belongs to the RuvA family. As to quaternary structure, homotetramer. Forms an RuvA(8)-RuvB(12)-Holliday junction (HJ) complex. HJ DNA is sandwiched between 2 RuvA tetramers; dsDNA enters through RuvA and exits via RuvB. An RuvB hexamer assembles on each DNA strand where it exits the tetramer. Each RuvB hexamer is contacted by two RuvA subunits (via domain III) on 2 adjacent RuvB subunits; this complex drives branch migration. In the full resolvosome a probable DNA-RuvA(4)-RuvB(12)-RuvC(2) complex forms which resolves the HJ.

It localises to the cytoplasm. The RuvA-RuvB-RuvC complex processes Holliday junction (HJ) DNA during genetic recombination and DNA repair, while the RuvA-RuvB complex plays an important role in the rescue of blocked DNA replication forks via replication fork reversal (RFR). RuvA specifically binds to HJ cruciform DNA, conferring on it an open structure. The RuvB hexamer acts as an ATP-dependent pump, pulling dsDNA into and through the RuvAB complex. HJ branch migration allows RuvC to scan DNA until it finds its consensus sequence, where it cleaves and resolves the cruciform DNA. This is Holliday junction branch migration complex subunit RuvA from Acholeplasma laidlawii (strain PG-8A).